Reading from the N-terminus, the 214-residue chain is Potassium-transporting ATPase KdpC subunit (214 aa).

A helical membrane pass occupies residues 17–37; it reads LWVITALIYPFSMIAIGQILF.

It belongs to the KdpC family. In terms of assembly, the system is composed of three essential subunits: KdpA, KdpB and KdpC.

It is found in the cell inner membrane. Functionally, part of the high-affinity ATP-driven potassium transport (or Kdp) system, which catalyzes the hydrolysis of ATP coupled with the electrogenic transport of potassium into the cytoplasm. This subunit acts as a catalytic chaperone that increases the ATP-binding affinity of the ATP-hydrolyzing subunit KdpB by the formation of a transient KdpB/KdpC/ATP ternary complex. This Microcystis aeruginosa (strain NIES-843 / IAM M-2473) protein is Potassium-transporting ATPase KdpC subunit.